Reading from the N-terminus, the 114-residue chain is uncharacterized protein (114 aa).

This sequence to E.coli YfiI and P.aeruginosa RluD.

This is an uncharacterized protein from Escherichia coli O6:H1 (strain CFT073 / ATCC 700928 / UPEC).